A 233-amino-acid polypeptide reads, in one-letter code: Probable chemoreceptor glutamine deamidase CheD (233 aa).

Belongs to the CheD family.

The enzyme catalyses L-glutaminyl-[protein] + H2O = L-glutamyl-[protein] + NH4(+). Its function is as follows. Probably deamidates glutamine residues to glutamate on methyl-accepting chemotaxis receptors (MCPs), playing an important role in chemotaxis. This Vibrio cholerae serotype O1 (strain ATCC 39315 / El Tor Inaba N16961) protein is Probable chemoreceptor glutamine deamidase CheD.